Consider the following 340-residue polypeptide: Glutaminyl-peptide cyclotransferase (340 aa).

The first 23 residues, 1 to 23 (MAIGSVVFAAAGLLLLLLPPSHQ), serve as a signal peptide directing secretion. The N-linked (GlcNAc...) asparagine glycan is linked to N42. 2 residues coordinate alpha-D-mannopyranose: R85 and E91. C113 and C136 are oxidised to a cystine. Position 131 (D131) interacts with Zn(2+). The alpha-D-mannopyranose site is built by Q151 and R155. N156 carries an N-linked (GlcNAc...) asparagine glycan. E170 (proton acceptor) is an active-site residue. A Zn(2+)-binding site is contributed by E171. D218 serves as the catalytic Proton acceptor. H297 provides a ligand contact to Zn(2+). L306 serves as a coordination point for alpha-D-mannopyranose.

This sequence belongs to the glutaminyl-peptide cyclotransferase family.

The protein localises to the secreted. It carries out the reaction N-terminal L-glutaminyl-[peptide] = N-terminal 5-oxo-L-prolyl-[peptide] + NH4(+). Inhibited by imidazoles (imidazole, benzimidazole, 1-benzylimidazole, 1-methylimidazole, P150/03, N-omega-acetylhistamine and 4-methylimidazole) and cysteamines (cysteamine, N-dimethylcysteamine and N-diethylcysteamine). Partially inhibited by PDB50 1(3,4-dimethoxyphenyl)-3-(3-imidazol-1-ylpropyl)thiourea. Its function is as follows. Acts as a glutaminyl-peptide cyclotransferase. Responsible for the biosynthesis of pyroglutamyl peptides. Might be more efficient in the conversion of tri and tetrapeptides in vitro. Might have a relative preference for substrates containing hydrophobic amino acids in vitro. The sequence is that of Glutaminyl-peptide cyclotransferase from Drosophila melanogaster (Fruit fly).